A 232-amino-acid polypeptide reads, in one-letter code: MLKMEINGGVATPTASAVAKVTETTTPVNSPSPTSSPPPPPSPQQPPQPPVVLSPCAACKILRRRCADKCVLAPYFPPTDPAKFTIAHRVFGASNIIKFLQELPESQRTDAVNSMVYEAGARMRDPVYGCAGAIYHLQRQVSELQAQLAKTQVELVGMQLQRSSLLELIYNMEQTKLSVQEQGQQKMSFESSFESGDEFISSPDEESNDLGFLEDNNNNNNSSMSWWDPLWT.

Residues 1 to 50 (MLKMEINGGVATPTASAVAKVTETTTPVNSPSPTSSPPPPPSPQQPPQPP) form a disordered region. Pro residues predominate over residues 34–50 (TSSPPPPPSPQQPPQPP). Residues 54-155 (SPCAACKILR…AQLAKTQVEL (102 aa)) enclose the LOB domain. The disordered stretch occupies residues 181-218 (EQGQQKMSFESSFESGDEFISSPDEESNDLGFLEDNNN). Positions 188–202 (SFESSFESGDEFISS) are enriched in low complexity.

The protein belongs to the LOB domain-containing protein family. Expressed in young shoots, stems, leaves and flowers.

In Arabidopsis thaliana (Mouse-ear cress), this protein is LOB domain-containing protein 11 (LBD11).